We begin with the raw amino-acid sequence, 172 residues long: Peroxiredoxin AHP1 (172 aa).

Positions 4 to 171 constitute a Thioredoxin domain; it reads LQPGDSFPAN…VLTVLGNQGK (168 aa). A Glycyl lysine isopeptide (Lys-Gly) (interchain with G-Cter in URM1) cross-link involves residue lysine 44. The active-site Cysteine sulfenic acid (-SOH) intermediate is cysteine 60. Cysteine 60 carries the post-translational modification Cysteine persulfide. Glycyl lysine isopeptide (Lys-Gly) (interchain with G-Cter in URM1) cross-links involve residues lysine 63, lysine 99, lysine 141, lysine 156, and lysine 171.

The protein belongs to the peroxiredoxin family. Prx5 subfamily. In terms of assembly, homodimer; disulfide-linked, upon oxidation. Post-translationally, conjugated to URM1, a ubiquitin-like protein, in response to oxidative stresses. The attachment of URM1 to lysine residues exclusively depends on the presence of a peroxidatic cysteine in the target protein, with low specificity for the particular residue, motif, or structural context at which urmylation can occur. The URM1-conjugation reaction is mechanistically and directly coupled to the process of cysteine persulfidation, transfering the sulfur atom of the URM1 thiocarboxyl group to redox-active cysteine residues in the target protein if it is exposed to oxidative conditions. In terms of processing, persulfidated on specific redox-active cysteine residues. Persulfidation (also called protein S-sulfhydration) may provide a molecular mechanism that enables cells to protect vulnerable cysteine residues from reactive oxygen species (ROS) under stress conditions.

Its subcellular location is the cytoplasm. It catalyses the reaction a hydroperoxide + [thioredoxin]-dithiol = an alcohol + [thioredoxin]-disulfide + H2O. Functionally, thiol-specific peroxidase that catalyzes the reduction of hydrogen peroxide and organic hydroperoxides to water and alcohols, respectively. Plays a role in cell protection against oxidative stress by detoxifying peroxides and as sensor of hydrogen peroxide-mediated signaling events. Preferentially eliminates organic peroxides rather than hydrogen peroxide. Relays alkyl hydroperoxides as a signal to the transcription factor CAD1/YAP2 by inducing the formation of intramolecular disulfide bonds in CAD1, which causes its nuclear accumulation and activation. Involved in cellular Mn(2+) homeostasis. The chain is Peroxiredoxin AHP1 (AHP1) from Chaetomium thermophilum (strain DSM 1495 / CBS 144.50 / IMI 039719) (Thermochaetoides thermophila).